We begin with the raw amino-acid sequence, 291 residues long: Putative butyrophilin-like protein 10 pseudogene (291 aa).

An N-terminal signal peptide occupies residues 1-26; sequence MAVTCDPEAFLSICFVTLVFLQLPLA. Positions 27-146 constitute an Ig-like V-type domain; sequence SIWKADFDVT…GEATVQVQVA (120 aa). Topologically, residues 27-254 are extracellular; sequence SIWKADFDVT…RSSQFTAWKA (228 aa). Cys54 and Cys128 are disulfide-bonded. N-linked (GlcNAc...) asparagine glycosylation is present at Asn59. The helical transmembrane segment at 255–275 threads the bilayer; it reads ALPLILVAMGLVIAGGICIFW. The Cytoplasmic segment spans residues 276 to 291; it reads KRQREKNKASLEEERE.

It belongs to the immunoglobulin superfamily. BTN/MOG family.

The protein resides in the membrane. The chain is Putative butyrophilin-like protein 10 pseudogene from Homo sapiens (Human).